Consider the following 116-residue polypeptide: Venom nerve growth factor (116 aa).

3 disulfides stabilise this stretch: cysteine 14–cysteine 78, cysteine 56–cysteine 106, and cysteine 66–cysteine 108. Position 86 (lysine 86) interacts with a 1,2-diacyl-sn-glycerol.

It belongs to the NGF-beta family. Homodimer; non-covalently linked. Interacts with NTRK1. Post-translationally, not glycosylated. In terms of tissue distribution, expressed by the venom gland.

It localises to the secreted. Nerve growth factor is important for the development and maintenance of the sympathetic and sensory nervous systems. It stimulates division and differentiation of sympathetic and embryonic sensory neurons as well as basal forebrain cholinergic neurons in the brain. Its relevance in the snake venom is not clear. However, it has been shown to inhibit metalloproteinase-dependent proteolysis of platelet glycoprotein Ib alpha, suggesting a metalloproteinase inhibition to prevent metalloprotease autodigestion and/or protection against prey proteases. Binds a lipid between the two protein chains in the homodimer. The lipid-bound form promotes histamine relase from mouse mast cells, contrary to the lipid-free form. The sequence is that of Venom nerve growth factor from Naja atra (Chinese cobra).